The chain runs to 494 residues: UPF0371 protein SSA_0208 (494 aa).

This sequence belongs to the UPF0371 family.

The protein is UPF0371 protein SSA_0208 of Streptococcus sanguinis (strain SK36).